The following is a 72-amino-acid chain: Translation initiation factor IF-1 (72 aa).

One can recognise an S1-like domain in the interval 1–72 (MSKTDVVEIE…TKGRIIWRDK (72 aa)).

This sequence belongs to the IF-1 family. Component of the 30S ribosomal translation pre-initiation complex which assembles on the 30S ribosome in the order IF-2 and IF-3, IF-1 and N-formylmethionyl-tRNA(fMet); mRNA recruitment can occur at any time during PIC assembly.

It localises to the cytoplasm. In terms of biological role, one of the essential components for the initiation of protein synthesis. Stabilizes the binding of IF-2 and IF-3 on the 30S subunit to which N-formylmethionyl-tRNA(fMet) subsequently binds. Helps modulate mRNA selection, yielding the 30S pre-initiation complex (PIC). Upon addition of the 50S ribosomal subunit IF-1, IF-2 and IF-3 are released leaving the mature 70S translation initiation complex. The polypeptide is Translation initiation factor IF-1 (Lachnoclostridium phytofermentans (strain ATCC 700394 / DSM 18823 / ISDg) (Clostridium phytofermentans)).